Here is a 278-residue protein sequence, read N- to C-terminus: Asnovolin E/Chermesin D methyltransferase nvfJ (278 aa).

Residues 125-126, 152-153, and 153-154 contribute to the S-adenosyl-L-methionine site; these read DL, NI, and IL.

The protein belongs to the class I-like SAM-binding methyltransferase superfamily. As to quaternary structure, homodimer.

The catalysed reaction is chermesin D + S-adenosyl-L-methionine = chermesin D methyl ester + S-adenosyl-L-homocysteine. It catalyses the reaction asnovolin I + S-adenosyl-L-methionine = asnovolin K + S-adenosyl-L-homocysteine. Its pathway is secondary metabolite biosynthesis; terpenoid biosynthesis. Methyltransferase; part of the gene cluster that mediates the biosynthesis of novofumigatonin, a heavily oxygenated meroterpenoid containing a unique orthoester moiety. The first step of the pathway is the synthesis of 3,5-dimethylorsellinic acid (DMOA) by the polyketide synthase nvfA via condensation of one acetyl-CoA starter unit with 3 malonyl-CoA units and 2 methylations. DMOA is then converted to farnesyl-DMOA by the farnesyltransferase nvfB. Epoxydation by FAD-dependent monooxygenase nvfK, followed by a protonation-initiated cyclization catalyzed by the terpene cyclase nvfL leads to the production of asnavolin H. The short chain dehydrogenase nvfC then as a 3-OH dehydrogenase of asnovolin H to yield chemesin D. There are two branches to synthesize asnovolin A from chemesin D. In one branch, chemesin D undergoes Baeyer-Villiger oxidation by nvfH, methylation by nvfJ, and enoyl reduction by the nvfM D enoylreductase that reduces the double bond between C-5'and C-6', to form respectively asnovolin I, asnovolin K, and asnovolin A. In the other branch, the methylation precedes the Baeyer-Villiger oxidation and the enoyl reduction to yield asnovolin A via the asnovolin J intermediate. Asnovolin A is further converted to fumigatonoid A by the Fe(II)/2-oxoglutarate-dependent dioxygenase nvfI that catalyzes an endoperoxidation reaction. The alpha/beta hydrolase nvfD then acts as an epimerase that converts fumigatonoid A to its C-5' epimer, which then undergoes spontaneous or nvfD-catalyzed lactonization. The following step utilizes the ketoreductase nvfG to produce fumigatonoid B. The dioxygenase nvfE further converts fumigatonoid B into fumigatonoid C. Finally the Fe(II)/2-oxoglutarate-dependent dioxygenase nvfF catalyzes two rounds of oxidation to transform fumigatonoid C into the end product, novofumigatonin A. This Aspergillus novofumigatus (strain IBT 16806) protein is Asnovolin E/Chermesin D methyltransferase nvfJ.